The following is a 1024-amino-acid chain: Beta-galactosidase 2 (1024 aa).

Residues Asn103 and Asp202 each contribute to the substrate site. Asp202 provides a ligand contact to Na(+). Mg(2+) contacts are provided by Glu417, His419, and Glu462. Substrate is bound by residues Glu462 and 538–541 (EYAH). Glu462 functions as the Proton donor in the catalytic mechanism. The active-site Nucleophile is Glu538. Asn598 contributes to the Mg(2+) binding site. Positions 602 and 605 each coordinate Na(+). Substrate contacts are provided by Asn605 and Trp1000.

The protein belongs to the glycosyl hydrolase 2 family. Homotetramer. Mg(2+) is required as a cofactor. Requires Na(+) as cofactor.

The enzyme catalyses Hydrolysis of terminal non-reducing beta-D-galactose residues in beta-D-galactosides.. The protein is Beta-galactosidase 2 of Klebsiella pneumoniae subsp. pneumoniae (strain ATCC 700721 / MGH 78578).